The following is a 376-amino-acid chain: Serine/threonine-protein kinase-transforming protein mos (376 aa).

The Protein kinase domain occupies 94-376; it reads VCLMHRLGSG…KALADSIEPM (283 aa). ATP is bound by residues 100-108 and lysine 121; that span reads LGSGGFGSV. Aspartate 229 functions as the Proton acceptor in the catalytic mechanism.

Belongs to the protein kinase superfamily. Ser/Thr protein kinase family.

It catalyses the reaction L-seryl-[protein] + ATP = O-phospho-L-seryl-[protein] + ADP + H(+). The enzyme catalyses L-threonyl-[protein] + ATP = O-phospho-L-threonyl-[protein] + ADP + H(+). The protein is Serine/threonine-protein kinase-transforming protein mos (V-MOS) of Moloney murine sarcoma virus (strain m1) (MoMSV).